The chain runs to 302 residues: tRNA-cytidine(32) 2-sulfurtransferase (302 aa).

The PP-loop motif motif lies at 43–48 (SGGKDS). [4Fe-4S] cluster-binding residues include C118, C121, and C209.

Belongs to the TtcA family. Homodimer. The cofactor is Mg(2+). [4Fe-4S] cluster serves as cofactor.

Its subcellular location is the cytoplasm. It carries out the reaction cytidine(32) in tRNA + S-sulfanyl-L-cysteinyl-[cysteine desulfurase] + AH2 + ATP = 2-thiocytidine(32) in tRNA + L-cysteinyl-[cysteine desulfurase] + A + AMP + diphosphate + H(+). Its pathway is tRNA modification. Catalyzes the ATP-dependent 2-thiolation of cytidine in position 32 of tRNA, to form 2-thiocytidine (s(2)C32). The sulfur atoms are provided by the cysteine/cysteine desulfurase (IscS) system. This Polynucleobacter asymbioticus (strain DSM 18221 / CIP 109841 / QLW-P1DMWA-1) (Polynucleobacter necessarius subsp. asymbioticus) protein is tRNA-cytidine(32) 2-sulfurtransferase.